Here is a 934-residue protein sequence, read N- to C-terminus: Protocadherin gamma-C3 (934 aa).

The N-terminal stretch at 1–31 (MVPEAWRSGLVSTGRVVGVLLLLGALNKAST) is a signal peptide. 6 Cadherin domains span residues 32 to 135 (VIHY…NPAF), 136 to 244 (PTQE…APVF), 245 to 352 (NQSL…APEI), 353 to 457 (TVTS…PPQS), 458 to 567 (SQSS…APQV), and 572 to 685 (PGGS…APRE). Residues 32–693 (VIHYEIPEER…REQNKNLTFY (662 aa)) are Extracellular-facing. N-linked (GlcNAc...) asparagine glycans are attached at residues N245, N424, N478, N550, N615, and N689. Residues 694–714 (LLLSLILVSVGFVVTVFGVII) form a helical membrane-spanning segment. Residues 715–934 (FKVYKWKQSR…KKKSGKKEKK (220 aa)) are Cytoplasmic-facing. Disordered regions lie at residues 804–843 (ESAP…WPNN) and 904–934 (ATLT…KEKK). The span at 812 to 843 (APPNTDWRFSQAQRPGTSGSQNGDDTGTWPNN) shows a compositional bias: polar residues. The span at 924–934 (NKKKSGKKEKK) shows a compositional bias: basic residues.

It localises to the cell membrane. Functionally, potential calcium-dependent cell-adhesion protein. May be involved in the establishment and maintenance of specific neuronal connections in the brain. In Pan troglodytes (Chimpanzee), this protein is Protocadherin gamma-C3 (PCDHGC3).